The sequence spans 406 residues: Calsequestrin-1 (406 aa).

An N-terminal signal peptide occupies residues 1–34; it reads MRATDRMGARAVSKLRLALLFVLVLGTPRSGVQG. Phosphotyrosine is present on Tyr-43. Ser-81 carries the post-translational modification Phosphoserine. Thr-124 carries the phosphothreonine modification. A Phosphoserine modification is found at Ser-216. Asn-350 carries an N-linked (GlcNAc...) asparagine glycan. Positions 382–406 are disordered; it reads EGEINTEDDDDDDDDDDDDDDDDDD.

Belongs to the calsequestrin family. In terms of assembly, monomer; increases in response to a depletion of intracellular calcium. Homodimer. Homotetramer and homopolymer. Can form linear homooligomers. Ca(2+) ions promote oligomerization. Interacts (via C-terminal end and preferentially with the monomeric form) with STIM1; this interaction increases in response to a depletion of intracellular calcium, decreases both STIM1 aggregation and clustering, interaction of STIM1 with ORAI1 and store-operated Ca(2+) entry (SOCE) activity. Interacts with ASPH and TRDN. N-glycosylated. In terms of tissue distribution, detected in skeletal muscle and in smooth muscle from vas deferens, aorta and stomach (at protein level).

It is found in the endoplasmic reticulum. It localises to the sarcoplasmic reticulum. The protein localises to the sarcoplasmic reticulum lumen. Its subcellular location is the sarcoplasmic reticulum membrane. The protein resides in the mitochondrion matrix. Its function is as follows. Calsequestrin is a high-capacity, moderate affinity, calcium-binding protein and thus acts as an internal calcium store in muscle. Calcium ions are bound by clusters of acidic residues at the protein surface, often at the interface between subunits. Can bind around 80 Ca(2+) ions. Regulates the release of lumenal Ca(2+) via the calcium release channel RYR1; this plays an important role in triggering muscle contraction. Negatively regulates store-operated Ca(2+) entry (SOCE) activity. The protein is Calsequestrin-1 (Casq1) of Rattus norvegicus (Rat).